Consider the following 101-residue polypeptide: Integration host factor subunit beta (101 aa).

A disordered region spans residues 58-101 (ARAGRNPRTGAHVPVDQKSVPFFKTGKEMRERLNRDTGAPDSGA). Over residues 82-92 (TGKEMRERLNR) the composition is skewed to basic and acidic residues.

This sequence belongs to the bacterial histone-like protein family. In terms of assembly, heterodimer of an alpha and a beta chain.

In terms of biological role, this protein is one of the two subunits of integration host factor, a specific DNA-binding protein that functions in genetic recombination as well as in transcriptional and translational control. The chain is Integration host factor subunit beta from Rhodopseudomonas palustris (strain BisB18).